A 249-amino-acid chain; its full sequence is 5'-nucleotidase SurE (249 aa).

The a divalent metal cation site is built by D8, D9, S39, and N91.

This sequence belongs to the SurE nucleotidase family. It depends on a divalent metal cation as a cofactor.

The protein resides in the cytoplasm. It catalyses the reaction a ribonucleoside 5'-phosphate + H2O = a ribonucleoside + phosphate. Nucleotidase that shows phosphatase activity on nucleoside 5'-monophosphates. The protein is 5'-nucleotidase SurE of Azotobacter vinelandii (strain DJ / ATCC BAA-1303).